The following is a 574-amino-acid chain: Bifunctional NADP phosphatase/NAD kinase (574 aa).

Positions 1–297 (MVIMEGFKIA…KLIALFGNRW (297 aa)) are NADP phosphatase. The Mg(2+) site is built by E69, D87, I89, D90, and D243. The tract at residues 302–574 (VKFGIVVRED…NKLSRCLGIK (273 aa)) is NAD kinase. D362 acts as the Proton acceptor in catalysis. Residues 362 to 363 (DG), R367, 436 to 437 (NE), K447, R464, D466, and 477 to 482 (TAYSLS) contribute to the NAD(+) site.

This sequence in the N-terminal section; belongs to the inositol monophosphatase superfamily. It in the C-terminal section; belongs to the NAD kinase family. In terms of assembly, homotetramer. It depends on Mg(2+) as a cofactor.

It localises to the cytoplasm. It carries out the reaction NAD(+) + ATP = ADP + NADP(+) + H(+). It catalyses the reaction NADP(+) + H2O = phosphate + NAD(+). The enzyme catalyses UTP + NAD(+) = UDP + NADP(+) + H(+). The catalysed reaction is 5-methyl-UTP + NAD(+) = 5-methyl-UDP + NADP(+) + H(+). It carries out the reaction CTP + NAD(+) = CDP + NADP(+) + H(+). It catalyses the reaction GTP + NAD(+) = GDP + NADP(+) + H(+). The enzyme catalyses dATP + NAD(+) = dADP + NADP(+) + H(+). The catalysed reaction is NADPH + H2O = phosphate + NADH. It carries out the reaction adenosine 2'-phosphate + H2O = adenosine + phosphate. It catalyses the reaction beta-D-fructose 1,6-bisphosphate + H2O = beta-D-fructose 6-phosphate + phosphate. Phosphatase activity is slightly inhibited by ADP, NADH and ATP, and moderately inhibited by NAD and 5'-AMP. Kinase activity is slightly inhibited by ADP and NADP. Functionally, involved in the regulation of the intracellular balance between NAD(H) and NADP(H), and is a key enzyme in the biosynthesis of NADP. Catalyzes the phosphorylation and dephosphorylation of NAD and NADP, respectively. Although it shows conflicting dual activities and is able to supply NADP, it seems that its physiological role is to prevent excess accumulation of NADP. Kinase can use ATP and other nucleoside triphosphates (UTP, TTP, CTP, GTP) as well as inorganic polyphosphate (poly(P)) as phosphoryl donors, however poly(P) is not considered to be the physiological phosphoryl donor. NAD is the preferred substrate for the kinase, but NADH can also be used as phosphoryl acceptor. Phosphatase can use NADP or NADPH as phosphoryl donor, but NADP is the preferred substrate. Phosphatase also has an activity toward the terminal phosphate group at C-2 of adenosine in 2'-AMP and toward the phosphate group at C-1 of fructose 1,6-bisphosphate, but not toward inositol 1-phosphate. This Methanocaldococcus jannaschii (strain ATCC 43067 / DSM 2661 / JAL-1 / JCM 10045 / NBRC 100440) (Methanococcus jannaschii) protein is Bifunctional NADP phosphatase/NAD kinase.